A 200-amino-acid polypeptide reads, in one-letter code: Nascent polypeptide-associated complex subunit alpha (200 aa).

Positions 1–19 are enriched in basic and acidic residues; that stretch reads MADPRVEELPEEEVKKTQV. 2 disordered regions span residues 1–54 and 118–165; these read MADP…NEKK and AAQQ…EDKD. A compositionally biased stretch (acidic residues) spans 20 to 34; that stretch reads EDLDNSSDDESDIEA. The NAC-A/B domain maps to 49-114; sequence SRNEKKARKA…AKIEDLNASA (66 aa). A compositionally biased stretch (basic and acidic residues) spans 127–146; the sequence is AEHDHAGHTHEHEEAGKAKE. The span at 147 to 160 shows a compositional bias: acidic residues; the sequence is EEEEDEGEEVDAEG. The region spanning 161 to 200 is the UBA domain; the sequence is IEDKDIELVMTQANVSRKKAIKALKENDNDIVNSIMALSI.

Belongs to the NAC-alpha family. In terms of assembly, part of the nascent polypeptide-associated complex (NAC), consisting of npc-1/egd2 and npc-2/egd1. NAC associates with ribosomes via npc-2/egd1.

The protein resides in the cytoplasm. The protein localises to the nucleus. Functionally, component of the nascent polypeptide-associated complex (NAC), a dynamic component of the ribosomal exit tunnel, protecting the emerging polypeptides from interaction with other cytoplasmic proteins to ensure appropriate nascent protein targeting. The NAC complex also promotes mitochondrial protein import by enhancing productive ribosome interactions with the outer mitochondrial membrane and blocks the inappropriate interaction of ribosomes translating non-secretory nascent polypeptides with translocation sites in the membrane of the endoplasmic reticulum. Npc-1/egd2 may also be involved in transcription regulation. This chain is Nascent polypeptide-associated complex subunit alpha (npc-1), found in Neurospora crassa (strain ATCC 24698 / 74-OR23-1A / CBS 708.71 / DSM 1257 / FGSC 987).